The following is a 178-amino-acid chain: Outer envelope pore protein 16-2, chloroplastic (178 aa).

The interval 1 to 102 (MEKSGGRIVM…DALVKNTGKE (102 aa)) is contains beta strands. A helical membrane pass occupies residues 103 to 119 (SLQWGLAAGLYSGITYG).

Belongs to the Tim17/Tim22/Tim23 family. Plastid outer envelope porin OEP16 (TC 1.B.30) subfamily. In terms of assembly, homodimer and oligomers in membrane. In terms of tissue distribution, detected in pollen and seeds. Present in leaves and cotyledons.

It localises to the plastid. It is found in the chloroplast outer membrane. Voltage-dependent high-conductance channel with a slight cation-selectivity; selective for amino acids but excludes triosephosphates or uncharged sugars. Non-essential amino acid-selective channel protein and translocation pore for NADPH:protochlorophyllide oxidoreductase A (PORA) and possibly PORB. The polypeptide is Outer envelope pore protein 16-2, chloroplastic (OEP162) (Arabidopsis thaliana (Mouse-ear cress)).